The primary structure comprises 444 residues: Probable ribonuclease FAU-1 (444 aa).

It belongs to the FAU-1 family.

Functionally, probable RNase involved in rRNA stability through maturation and/or degradation of precursor rRNAs. Binds to RNA in loop regions with AU-rich sequences. This Pyrobaculum arsenaticum (strain DSM 13514 / JCM 11321 / PZ6) protein is Probable ribonuclease FAU-1.